A 476-amino-acid polypeptide reads, in one-letter code: Calcium uptake protein 1, mitochondrial (476 aa).

A mitochondrion-targeting transit peptide spans 1–33 (MFRLNSLSALAELAVGSRWYHGGSQPIQIRRRL). The disordered stretch occupies residues 68 to 106 (SDIGDKGKNKDEGDVCNHEKKTADLAPHPEEKKKKRSGF). Residues 99–110 (KKKKRSGFRDRK) are polybasic region. Phosphoserine is present on Ser-122. The k/R-ring stretch occupies residues 126–129 (KIFR). One can recognise an EF-hand 1 domain in the interval 218-253 (TPQRNFEIAFKMFDLNGDGEVDMEEFEQVQSIIRSQ). 5 residues coordinate Ca(2+): Asp-231, Asn-233, Asp-235, Glu-237, and Glu-242. The tract at residues 259-263 (RHRDR) is k/R-ring. Residues 408 to 443 (LSDHVCDVVFALFDCDGNGELSNKEFVSIMKQRLMR) enclose the EF-hand 2 domain. Asp-421, Asp-423, Asn-425, Glu-427, and Glu-432 together coordinate Ca(2+). Arg-455 bears the Asymmetric dimethylarginine mark. Residues 455–465 (RLMQAMWKCAQ) are C-helix region.

The protein belongs to the MICU1 family. MICU1 subfamily. As to quaternary structure, heterodimer; disulfide-linked; heterodimerizes with MICU2 or MICU3. Homodimer; disulfide-linked. Component of the uniplex complex, composed of MCU, EMRE/SMDT1, MICU1 and MICU2 (or MICU3) in a 4:4:1:1 stoichiometry. The composition of calcium sensors within the uniplex complex can differ depending on tissues: a MICU1 homodimer can be present instead of the MICU1-MICU2 heterodimer in skeletal-muscle and kidney. MICU1 is recruited to the uniplex complex by EMRE/SMDT1, and it associates with MCU at low calcium levels, occluding the pore of the MCU channel. Associates with the MICOS complex. Interacts with SLC25A23. Interacts with CHCHD4/MIA40; which introduces the interchain disulfide bond with MICU2. Interacts (when methylated) with UCP2; leading to decrease the calcium sensitivity of MICU1. In terms of processing, phosphorylation at Ser-122 by AKT1 impairs its maturation and stability. Asymmetric dimethylation at Arg-455 by PRMT1 decreases the calcium sensitivity of MICU1 by promoting interaction with UCP2. Post-translationally, degraded by YME1L1 when not complexed as homodimer or heterodimer. Not degraded when complexed as homodimer or heterodimer; the presence of the interchain disulfide bond protecting MICU1 from degradation by YME1L1. As to expression, expressed in epithelial cell lines. Strongly expressed in epidermal keratinocytes and dermal endothelial cells.

The protein localises to the mitochondrion intermembrane space. It localises to the mitochondrion inner membrane. Its activity is regulated as follows. Activated by spermine, kaempferol and SB202190, which bind MICU1 and prevent MCU pore occlusion in absence of calcium. Functionally, calcium sensor of the mitochondrial calcium uniporter (MCU) channel, which senses calcium level via its EF-hand domains. MICU1 and MICU2 (or MICU3) form a disulfide-linked heterodimer that stimulates and inhibits MCU activity, depending on the concentration of calcium. At low calcium levels, MICU1 occludes the pore of the MCU channel, preventing mitochondrial calcium uptake. At higher calcium levels, calcium-binding to MICU1 and MICU2 (or MICU3) induces a conformational change that weakens MCU-MICU1 interactions and moves the MICU1-MICU2 heterodimer away from the pore, allowing calcium permeation through the MCU channel. Also required to protect against manganese toxicity by preventing manganese uptake by MCU: mechanistically, manganese-binding to its EF-hand domains does not induce any conformational change, maintaining MCU pore occlusion. Also acts as a barrier for inhibitors of the MCU channel, such as ruthenium red or its derivative Ru360. Acts as a regulator of mitochondrial cristae structure independently of its ability to regulate the mitochondrial calcium uniporter channel. Regulates glucose-dependent insulin secretion in pancreatic beta-cells by regulating mitochondrial calcium uptake. Induces T-helper 1-mediated autoreactivity, which is accompanied by the release of IFNG. Its function is as follows. Isoform that regulates mitochondrial calcium uniporter (MCU) in the skeletal muscle. Compared to other isoforms, this isoform has higher affinity for calcium, promoting mitochondrial calcium uptake at lower calcium concentrations. This allows a rapid response of mitochondrial metabolism and ensures sustained ATP production needed for resistance and strenuous exercise. In Homo sapiens (Human), this protein is Calcium uptake protein 1, mitochondrial.